The primary structure comprises 744 residues: Tripartite motif-containing protein 2 (744 aa).

S10 is subject to Phosphoserine. The RING-type zinc finger occupies 23–64 (CSICLERYKNPKVLPCLHTFCERCLQNYIPAHSLTLSCPVCR). The B box-type zinc finger occupies 113 to 154 (GKPLSCPNHDGNVMEFYCQSCETAMCRECTEGEHAEHPTVPL). Residues C118, H121, C141, and H146 each contribute to the Zn(2+) site. Residues 320–421 (TTNAVASETV…IRGSPFKLKV (102 aa)) form a Filamin repeat. Phosphothreonine is present on T371. Phosphoserine is present on residues S375, S424, and S428. The disordered stretch occupies residues 432-462 (EGVKRRVKSPGSGHVKQKAVKRPASMYSTGK). NHL repeat units lie at residues 473–516 (IFRV…FSND), 520–563 (KSRF…FSSD), 564–605 (GKFK…FQPN), 609–652 (VTRF…FNQE), 656–699 (MLKF…FDGS), and 700–743 (GSFL…YRYL).

It belongs to the TRIM/RBCC family. In terms of assembly, forms homooligomers. Interacts with TRIM3; this interaction reduces TRIM2 activity. Interacts with myosin V; myosin V may not be a substrate for ubiquitination. Interacts with NEFL. Interacts with phosphorylated BCL2L11. Interacts with SIRPA. RING-type zinc finger-dependent and UBE2D1-dependent autoubiquitination.

It is found in the cytoplasm. The catalysed reaction is S-ubiquitinyl-[E2 ubiquitin-conjugating enzyme]-L-cysteine + [acceptor protein]-L-lysine = [E2 ubiquitin-conjugating enzyme]-L-cysteine + N(6)-ubiquitinyl-[acceptor protein]-L-lysine.. The protein operates within protein modification; protein ubiquitination. In terms of biological role, UBE2D1-dependent E3 ubiquitin-protein ligase that mediates the ubiquitination of NEFL and of phosphorylated BCL2L11. Plays a neuroprotective function. May play a role in neuronal rapid ischemic tolerance. Plays a role in antiviral immunity and limits New World arenavirus infection independently of its ubiquitin ligase activity. The chain is Tripartite motif-containing protein 2 (TRIM2) from Homo sapiens (Human).